The primary structure comprises 35 residues: Photosystem II reaction center protein Y (35 aa).

Over Met-1–Arg-4 the chain is Lumenal. The helical transmembrane segment at Leu-5–Ile-23 threads the bilayer. The Stromal segment spans residues Gly-24–Ser-35.

It belongs to the PsbY family. In terms of assembly, PSII is composed of 1 copy each of membrane proteins PsbA, PsbB, PsbC, PsbD, PsbE, PsbF, PsbH, PsbI, PsbJ, PsbK, PsbL, PsbM, PsbT, PsbX, PsbY, PsbZ, Psb30/Ycf12, at least 3 peripheral proteins of the oxygen-evolving complex and a large number of cofactors. It forms dimeric complexes.

It is found in the plastid. Its subcellular location is the chloroplast thylakoid membrane. Loosely associated component of the core of photosystem II (PSII), it is not always seen in crystals. PSII is a light-driven water plastoquinone oxidoreductase, using light energy to abstract electrons from H(2)O, generating a proton gradient subsequently used for ATP formation. The chain is Photosystem II reaction center protein Y from Emiliania huxleyi (Coccolithophore).